We begin with the raw amino-acid sequence, 320 residues long: BTB and MATH domain-containing protein 36 (320 aa).

The region spanning 7-136 (KGSIRFEIQN…DKHAVLEVQI (130 aa)) is the MATH domain. The BTB domain maps to 160-227 (TDVVLVLEGK…IYPTHMLINS (68 aa)).

The polypeptide is BTB and MATH domain-containing protein 36 (bath-36) (Caenorhabditis elegans).